A 179-amino-acid chain; its full sequence is Probable phosphopantothenoylcysteine decarboxylase (179 aa).

Residue Asn-124 participates in substrate binding. The Proton donor role is filled by Cys-157.

Belongs to the HFCD (homooligomeric flavin containing Cys decarboxylase) superfamily. It depends on FMN as a cofactor.

The catalysed reaction is N-[(R)-4-phosphopantothenoyl]-L-cysteine + H(+) = (R)-4'-phosphopantetheine + CO2. It functions in the pathway cofactor biosynthesis; coenzyme A biosynthesis; CoA from (R)-pantothenate: step 3/5. Its function is as follows. Catalyzes the decarboxylation of 4'-phosphopantothenoylcysteine to 4'-phosphopantetheine. The protein is Probable phosphopantothenoylcysteine decarboxylase (coaC) of Streptococcus mutans serotype c (strain ATCC 700610 / UA159).